We begin with the raw amino-acid sequence, 319 residues long: MRLRLLALAAAVLLGPAPEVCGALNVTVSPGPVVDYLEGENATLLCHVSQKRRKDSLLAVRWFFAPDGSQEALMVKMTKLRIIQYYGNFSRTANQQRLRLLEERRGVLYRLSVLTLRPTDQGQYVCKVQEISKHRNKWTAWSNGSSATEMRVISLKAGEDSSFEKKKVTWAFFEDLYVYAVLVCCVGILSVLLFTLVIAWQSVFHKRKSRVRHYLVKCPQNSSGETVTSVTSLAPLQPQKGKRQKKKVDVPPAVPAKAPIATTFHKPKLLKPQRKVALPKITEENLTYAELELIKPHRAAKGVPTSTVYAQILFEENQL.

Residues 1–23 (MRLRLLALAAAVLLGPAPEVCGA) form the signal peptide. Residues 24–154 (LNVTVSPGPV…SSATEMRVIS (131 aa)) enclose the Ig-like domain. N-linked (GlcNAc...) asparagine glycans are attached at residues Asn25 and Asn41. Cys46 and Cys126 are joined by a disulfide. Asn143 carries N-linked (GlcNAc...) asparagine glycosylation. Residues 180–200 (AVLVCCVGILSVLLFTLVIAW) traverse the membrane as a helical segment.

Proteolytically cleaved to generate a bioactive peptide. In terms of tissue distribution, peptide Lv is widely expressed in various tissues and the central nervous system, including the retinal photoreceptor layer, hippocampus, olfactory bulb, and cerebellum.

Its subcellular location is the cell membrane. The protein localises to the secreted. Peptide Lv enhances L-type voltage-gated calcium channel (L-VGCC) currents in retinal photoreceptors. The protein is V-set and transmembrane domain-containing protein 4 (Vstm4) of Mus musculus (Mouse).